A 130-amino-acid chain; its full sequence is Large ribosomal subunit protein bL20c (130 aa).

It belongs to the bacterial ribosomal protein bL20 family.

It localises to the plastid. It is found in the chloroplast. Binds directly to 23S ribosomal RNA and is necessary for the in vitro assembly process of the 50S ribosomal subunit. It is not involved in the protein synthesizing functions of that subunit. The sequence is that of Large ribosomal subunit protein bL20c from Fagopyrum esculentum subsp. ancestrale (Wild buckwheat).